Consider the following 471-residue polypeptide: 3-isopropylmalate dehydratase large subunit (471 aa).

Residues C347, C407, and C410 each coordinate [4Fe-4S] cluster.

The protein belongs to the aconitase/IPM isomerase family. LeuC type 1 subfamily. As to quaternary structure, heterodimer of LeuC and LeuD. The cofactor is [4Fe-4S] cluster.

The enzyme catalyses (2R,3S)-3-isopropylmalate = (2S)-2-isopropylmalate. Its pathway is amino-acid biosynthesis; L-leucine biosynthesis; L-leucine from 3-methyl-2-oxobutanoate: step 2/4. Its function is as follows. Catalyzes the isomerization between 2-isopropylmalate and 3-isopropylmalate, via the formation of 2-isopropylmaleate. The polypeptide is 3-isopropylmalate dehydratase large subunit (Vibrio parahaemolyticus serotype O3:K6 (strain RIMD 2210633)).